The primary structure comprises 219 residues: Protein Cmaq_0360 (219 aa).

The region spanning 8–204 is the AMMECR1 domain; it reads EQGKFLVRLA…EKGPRGDVYE (197 aa).

The sequence is that of Protein Cmaq_0360 from Caldivirga maquilingensis (strain ATCC 700844 / DSM 13496 / JCM 10307 / IC-167).